A 570-amino-acid polypeptide reads, in one-letter code: Protein NDNF (570 aa).

An N-terminal signal peptide occupies residues 1–19 (MKLCPWYIALILLPVCLQS). Fibronectin type-III domains lie at 261–333 (NNAG…VGTF) and 447–566 (PSLP…IVKT). A glycan (N-linked (GlcNAc...) asparagine) is linked at asparagine 324.

It is found in the secreted. Functionally, secretory protein that plays a role in various cellular processes. Acts as a chemorepellent acting on gonadotropin-releasing hormone (GnRH) expressing neurons regulating their migration to the hypothalamus. Also promotes neuron migration, growth and survival as well as neurite outgrowth and is involved in the development of the olfactory system. May also act through the regulation of growth factors activity and downstream signaling. Also regulates extracellular matrix assembly and cell adhesiveness. Promotes endothelial cell survival, vessel formation and plays an important role in the process of revascularization through NOS3-dependent mechanisms. The protein is Protein NDNF (ndnf) of Xenopus tropicalis (Western clawed frog).